The chain runs to 133 residues: EPAKSEDLIKWRQSAYQVLHWNMDRLKANIDSPQYNKDDGIKAANTIAAIANSGMGSLFAAGTETGKGWHPTSVKPAFFTDGKKVGEVAVAFNKEANELAKVAATGDAAAVKAQFGKVGQTCKACHDDFRRKD.

Heme c is bound by residues Arg-12, Thr-72, Cys-122, Cys-125, and His-126.

Post-translationally, binds 1 heme c group covalently per subunit.

Cytochrome c' is the most widely occurring bacterial c-type cytochrome. Cytochromes c' are high-spin proteins and the heme has no sixth ligand. Their exact function is not known. In Rhodocyclus tenuis (Rhodospirillum tenue), this protein is Cytochrome c'.